The chain runs to 395 residues: MWGLCKKHFPSNKIQVQERNKALKPKKSGSEHKTKQLFPVFNCKKKEKGVMIRFAILRNANTSLLSARSICLFTQAPTYCHVRLNTLNKSITTKRNSLTESKRHVHDGKHFFTTPHQQQQTKLGEIEEGHSPNIKGEDLRSIGQAITHQRNKRRKQIWSAIFGGIFGVILGYSLIYRVIYLKEQSFLPLFPSSKIRKLSTRDLKKVDVNQVQKLSKLRVLEILSGHDMIKEQYGVPLLDKDGNSPTLNEFSMWCEDQDPCVTGIVMEPDDKRDSSHTWYRIPFVCKWRITHRPISIRGTIDDLLNRIGLETADLFEIISPERVYGSFKYEYPLQGDSHALHLWFHGEIELDDDSLIVYNGKYHVDVKLQEIDLFRREKNGQLIQYVLYKNEAGDK.

A helical membrane pass occupies residues Q156–Y176.

Belongs to the AIM39 family.

The protein localises to the mitochondrion membrane. The protein is Altered inheritance of mitochondria protein 39, mitochondrial (AIM39) of Saccharomyces cerevisiae (strain ATCC 204508 / S288c) (Baker's yeast).